The chain runs to 292 residues: Diaminopimelate epimerase (292 aa).

3 residues coordinate substrate: Asn13, Gln46, and Asn66. Residue Cys75 is the Proton donor of the active site. Substrate is bound by residues 76–77, Asn170, Asn203, and 221–222; these read GN and ER. The Proton acceptor role is filled by Cys230. 231–232 is a binding site for substrate; it reads GT.

The protein belongs to the diaminopimelate epimerase family. As to quaternary structure, homodimer.

It is found in the cytoplasm. The enzyme catalyses (2S,6S)-2,6-diaminopimelate = meso-2,6-diaminopimelate. Its pathway is amino-acid biosynthesis; L-lysine biosynthesis via DAP pathway; DL-2,6-diaminopimelate from LL-2,6-diaminopimelate: step 1/1. In terms of biological role, catalyzes the stereoinversion of LL-2,6-diaminopimelate (L,L-DAP) to meso-diaminopimelate (meso-DAP), a precursor of L-lysine and an essential component of the bacterial peptidoglycan. The polypeptide is Diaminopimelate epimerase (Acidovorax ebreus (strain TPSY) (Diaphorobacter sp. (strain TPSY))).